We begin with the raw amino-acid sequence, 120 residues long: Immunoglobulin kappa variable 2D-26 (120 aa).

An N-terminal signal peptide occupies residues 1-20 (MRLPAQLLGLLMLWVPGSSA). The framework-1 stretch occupies residues 21-43 (EIVMTQTPLSLSITPGEQASMSC). The Ig-like domain maps to 21 to 120 (EIVMTQTPLS…YYCMQDAQDP (100 aa)). Cysteine 43 and cysteine 113 form a disulfide bridge. The tract at residues 44-59 (RSSQSLLHSDGYTYLY) is complementarity-determining-1. The segment at 60–74 (WFLQKARPVSTLLIY) is framework-2. The complementarity-determining-2 stretch occupies residues 75–81 (EVSNRFS). Residues 82–113 (GVPDRFSGSGSGTDFTLKISRVEAEDFGVYYC) are framework-3. Positions 114-120 (MQDAQDP) are complementarity-determining-3.

In terms of assembly, immunoglobulins are composed of two identical heavy chains and two identical light chains; disulfide-linked.

The protein resides in the secreted. It localises to the cell membrane. Functionally, v region of the variable domain of immunoglobulin light chains that participates in the antigen recognition. Immunoglobulins, also known as antibodies, are membrane-bound or secreted glycoproteins produced by B lymphocytes. In the recognition phase of humoral immunity, the membrane-bound immunoglobulins serve as receptors which, upon binding of a specific antigen, trigger the clonal expansion and differentiation of B lymphocytes into immunoglobulins-secreting plasma cells. Secreted immunoglobulins mediate the effector phase of humoral immunity, which results in the elimination of bound antigens. The antigen binding site is formed by the variable domain of one heavy chain, together with that of its associated light chain. Thus, each immunoglobulin has two antigen binding sites with remarkable affinity for a particular antigen. The variable domains are assembled by a process called V-(D)-J rearrangement and can then be subjected to somatic hypermutations which, after exposure to antigen and selection, allow affinity maturation for a particular antigen. In Homo sapiens (Human), this protein is Immunoglobulin kappa variable 2D-26.